The following is a 354-amino-acid chain: Selenide, water dikinase (354 aa).

Residue C23 is part of the active site. ATP-binding positions include K26 and 54–56; that span reads TSD. A Mg(2+)-binding site is contributed by D57. Residues D74, D97, and 145–147 contribute to the ATP site; that span reads GHS. Residue D97 participates in Mg(2+) binding. D233 contributes to the Mg(2+) binding site.

The protein belongs to the selenophosphate synthase 1 family. Class I subfamily. Homodimer. It depends on Mg(2+) as a cofactor.

The enzyme catalyses hydrogenselenide + ATP + H2O = selenophosphate + AMP + phosphate + 2 H(+). Synthesizes selenophosphate from selenide and ATP. This is Selenide, water dikinase from Burkholderia pseudomallei (strain K96243).